The chain runs to 390 residues: Homeobox protein Meis1 (390 aa).

The MEIS N-terminal domain maps to 108 to 192 (GGDVCSSESF…IDLVIDDREG (85 aa)). Basic and acidic residues predominate over residues 190 to 202 (REGGSKSDSEDVT). The tract at residues 190–279 (REGGSKSDSE…KKRHKKRGIF (90 aa)) is disordered. The segment covering 203-213 (RSANLTDQPSW) has biased composition (polar residues). The segment at residues 272–334 (RHKKRGIFPK…NARRRIVQPM (63 aa)) is a DNA-binding region (homeobox; TALE-type). The tract at residues 299 to 329 (YPSEEQKKQLAQDTGLTILQVNNWFINARRR) is interaction with DNA. The segment at 335–390 (IDQSNRAVSQGTPYNPDGQPMGGFVMDGQQHMGIRAPGPMSGMGMNMGMEGQWHYM) is required for transcriptional activation.

It belongs to the TALE/MEIS homeobox family. In terms of assembly, interacts with the N-terminal region of PBX1 to form a heterodimer which binds DNA including a cAMP-responsive sequence in CYP17. Also forms heterodimers with PBX2. Forms heterotrimers with PBX1 or PBX2 and a number of HOX proteins including HOXA9, HOXD4 and HOXD9 where it acts as a non-DNA-binding partner. Also forms heterotrimers with PBX1 and HOX proteins including HOXD9 and HOXD10 where PBX1 is the non-DNA-binding partner. Heterodimer with DLX3. Heterodimer with HOXB13. As to expression, expressed at high levels in the lung with lower levels detected in the heart and brain. Expressed in pancreatic islets (beta-cells and non-beta-cells).

Its subcellular location is the nucleus. In terms of biological role, acts as a transcriptional regulator of PAX6. Also acts as a transcriptional activator of PF4 in complex with PBX1 or PBX2. Required for hematopoiesis, megakaryocyte lineage development and vascular patterning. May function as a cofactor for HOXA7 and HOXA9 in the induction of myeloid leukemias. This is Homeobox protein Meis1 (Meis1) from Mus musculus (Mouse).